A 309-amino-acid chain; its full sequence is MKLNLLLLLFIVELVAAVTNYNLGSAPVSRYLSKTGTYSPVAASRVCNDNCYSFYEGELFCGKFDSNVSETDYLNCLCLNKQYRSNFEGCNCKSESEVNFFDWKSSCSDISSVKNYSLPTTQLGTCNSHCSAYQTIPAECLVYESGKYQEDQVCICQNAEFWYHYENCDCLDFGDVDHEYEDICYYATNSFVTSDDYYDSFFATYTEGSFESILEKGSFLAEQKGSITSGLASKTETSKVSTTTFSSNGTSSGTTNGDTRAETKSSNSTQTSSSDKNSSQINSISSTGVANFVASFGMGTLLLFVLSLC.

A signal peptide spans 1–17; it reads MKLNLLLLLFIVELVAA. Residues Asn-67, Asn-115, Asn-248, Asn-267, and Asn-277 are each glycosylated (N-linked (GlcNAc...) asparagine). The tract at residues 241–281 is disordered; the sequence is STTTFSSNGTSSGTTNGDTRAETKSSNSTQTSSSDKNSSQI. The GPI-anchor amidated serine moiety is linked to residue Ser-286. A propeptide spans 287–309 (removed in mature form); the sequence is TGVANFVASFGMGTLLLFVLSLC.

It belongs to the IHD1 family. Post-translationally, the GPI-anchor is attached to the protein in the endoplasmic reticulum and serves to target the protein to the cell surface. There, the glucosamine-inositol phospholipid moiety is cleaved off and the GPI-modified mannoprotein is covalently attached via its lipidless GPI glycan remnant to the 1,6-beta-glucan of the outer cell wall layer.

It is found in the secreted. Its subcellular location is the cell wall. The protein localises to the membrane. Functionally, probable GPI-anchored cell wall protein that may be involved in cell wall organization, hyphal growth, as well as in virulence. This Candida albicans (strain SC5314 / ATCC MYA-2876) (Yeast) protein is Probable cell wall protein PGA50 (PGA50).